Reading from the N-terminus, the 239-residue chain is RNA polymerase sigma factor FliA (239 aa).

The tract at residues 16 to 88 (LWQRYVPLVR…MLDELRSRDW (73 aa)) is sigma-70 factor domain-2. An Interaction with polymerase core subunit RpoC motif is present at residues 43-46 (DLLQ). The segment at 96-166 (NAREVAQAIG…IELVTDDHQR (71 aa)) is sigma-70 factor domain-3. Residues 185 to 233 (AIETLPEREKLVLTLYYQEELNLKEIGAVLEVGESRVSQLHSQAIKRLR) are sigma-70 factor domain-4. The segment at residues 207 to 226 (LKEIGAVLEVGESRVSQLHS) is a DNA-binding region (H-T-H motif).

It belongs to the sigma-70 factor family. FliA subfamily.

It localises to the cytoplasm. Functionally, sigma factors are initiation factors that promote the attachment of RNA polymerase to specific initiation sites and are then released. This sigma factor controls the expression of flagella-related genes. This is RNA polymerase sigma factor FliA from Escherichia coli O157:H7.